The chain runs to 60 residues: Small ribosomal subunit protein eS17 (60 aa).

It belongs to the eukaryotic ribosomal protein eS17 family.

The protein is Small ribosomal subunit protein eS17 of Methanosphaera stadtmanae (strain ATCC 43021 / DSM 3091 / JCM 11832 / MCB-3).